Reading from the N-terminus, the 505-residue chain is Phase 1 flagellin (505 aa).

The protein belongs to the bacterial flagellin family.

It localises to the secreted. The protein resides in the bacterial flagellum. Flagellin is the subunit protein which polymerizes to form the filaments of bacterial flagella. The polypeptide is Phase 1 flagellin (fliC) (Salmonella naestved).